A 484-amino-acid polypeptide reads, in one-letter code: Phosphoenolpyruvate carboxylase (484 aa).

This sequence belongs to the PEPCase type 2 family. Homotetramer. The cofactor is Mg(2+).

The catalysed reaction is oxaloacetate + phosphate = phosphoenolpyruvate + hydrogencarbonate. Functionally, catalyzes the irreversible beta-carboxylation of phosphoenolpyruvate (PEP) to form oxaloacetate (OAA), a four-carbon dicarboxylic acid source for the tricarboxylic acid cycle. The protein is Phosphoenolpyruvate carboxylase of Methanospirillum hungatei JF-1 (strain ATCC 27890 / DSM 864 / NBRC 100397 / JF-1).